Consider the following 209-residue polypeptide: Small ribosomal subunit protein uS4 (209 aa).

One can recognise an S4 RNA-binding domain in the interval 98-164 (SRLDNVVYRG…TPFIVARETA (67 aa)).

Belongs to the universal ribosomal protein uS4 family. As to quaternary structure, part of the 30S ribosomal subunit. Contacts protein S5. The interaction surface between S4 and S5 is involved in control of translational fidelity.

Functionally, one of the primary rRNA binding proteins, it binds directly to 16S rRNA where it nucleates assembly of the body of the 30S subunit. Its function is as follows. With S5 and S12 plays an important role in translational accuracy. This is Small ribosomal subunit protein uS4 from Frankia alni (strain DSM 45986 / CECT 9034 / ACN14a).